Reading from the N-terminus, the 674-residue chain is Xaa-Pro aminopeptidase 2 (674 aa).

The signal sequence occupies residues 1 to 21; that stretch reads MARAHWGCCPWLVLLCACAWG. Asparagine 35, asparagine 49, and asparagine 65 each carry an N-linked (GlcNAc...) asparagine glycan. Arginine 116 lines the substrate pocket. N-linked (GlcNAc...) asparagine glycosylation is found at asparagine 278 and asparagine 291. Histidine 430 contacts substrate. Zn(2+)-binding residues include aspartate 450, aspartate 461, and histidine 524. Positions 524, 533, and 555 each coordinate substrate. Residues glutamate 555 and glutamate 569 each coordinate Zn(2+). The GPI-anchor amidated alanine moiety is linked to residue alanine 649. Positions 650-674 are cleaved as a propeptide — removed in mature form; that stretch reads ARAPDTASWASVLVVSTLAILGWSV.

Belongs to the peptidase M24B family. As to quaternary structure, homotrimer. Zn(2+) serves as cofactor. Post-translationally, N-glycosylated. In terms of tissue distribution, expressed in kidney, lung, heart, placenta, liver, small intestine and colon. No expression in brain, skeletal muscle, pancreas, spleen, thymus, prostate, testis and ovary.

It localises to the cell membrane. It catalyses the reaction Release of any N-terminal amino acid, including proline, that is linked to proline, even from a dipeptide or tripeptide.. Its activity is regulated as follows. Inhibited by apstatin and the chelating agent 1,10-phenanthroline. Also inhibited by high concentrations of Zn(2+). Not significantly inhibited by bestatin or phosphoramidon. Its function is as follows. Membrane-bound metalloprotease which catalyzes the removal of a penultimate prolyl residue from the N-termini of peptides, such as Arg-Pro-Pro. May play a role in the metabolism of the vasodilator bradykinin. This is Xaa-Pro aminopeptidase 2 (XPNPEP2) from Homo sapiens (Human).